The primary structure comprises 244 residues: tRNA (guanine-N(7)-)-methyltransferase (244 aa).

Glu74, Glu99, Asp126, and Asp149 together coordinate S-adenosyl-L-methionine. Residue Asp149 is part of the active site. Residues Lys153, Asp185, and 222–225 (TKFE) each bind substrate.

The protein belongs to the class I-like SAM-binding methyltransferase superfamily. TrmB family.

It carries out the reaction guanosine(46) in tRNA + S-adenosyl-L-methionine = N(7)-methylguanosine(46) in tRNA + S-adenosyl-L-homocysteine. The protein operates within tRNA modification; N(7)-methylguanine-tRNA biosynthesis. In terms of biological role, catalyzes the formation of N(7)-methylguanine at position 46 (m7G46) in tRNA. The polypeptide is tRNA (guanine-N(7)-)-methyltransferase (Colwellia psychrerythraea (strain 34H / ATCC BAA-681) (Vibrio psychroerythus)).